Here is a 292-residue protein sequence, read N- to C-terminus: Peroxisomal 2,4-dienoyl-CoA reductase [(3E)-enoyl-CoA-producing] (292 aa).

NADP(+) contacts are provided by residues 35 to 40 (GGGSGI), 60 to 64 (RSLPR), and Asp86. Position 60 (Arg60) interacts with substrate. Substrate contacts are provided by residues Arg88, Phe118, and 126–128 (SFN). Lys151 is modified (N6-acetyllysine). NADP(+) is bound by residues Lys182 and 208–214 (PGAISGT). Arg219 provides a ligand contact to substrate. The residue at position 287 (Ser287) is a Phosphoserine. The short motif at 290–292 (AKL) is the Microbody targeting signal element. Lys291 is subject to N6-acetyllysine.

It belongs to the short-chain dehydrogenases/reductases (SDR) family. 2,4-dienoyl-CoA reductase subfamily. Monomer, dimer and oligomer.

The protein resides in the peroxisome. The catalysed reaction is a (2E,4Z)-dienoyl-CoA + NADPH + H(+) = a 4,5-saturated-(3E)-enoyl-CoA + NADP(+). The enzyme catalyses a (2E,4E)-dienoyl-CoA + NADPH + H(+) = a 4,5-saturated-(3E)-enoyl-CoA + NADP(+). It carries out the reaction (2E,4E)-hexadienoyl-CoA + NADPH + H(+) = (3E)-hexenoyl-CoA + NADP(+). It catalyses the reaction (2E,4E)-decadienoyl-CoA + NADPH + H(+) = (3E)-decenoyl-CoA + NADP(+). The catalysed reaction is (2E,4Z,7Z,10Z,13Z,16Z,19Z)-docosaheptaenoyl-CoA + NADPH + H(+) = (3E,7Z,10Z,13Z,16Z,19Z)-docosahexaenoyl-CoA + NADP(+). Its function is as follows. Auxiliary enzyme of beta-oxidation. Participates in the degradation of unsaturated fatty enoyl-CoA esters having double bonds in both even- and odd-numbered positions in peroxisome. Catalyzes the NADP-dependent reduction of 2,4-dienoyl-CoA to yield trans-3-enoyl-CoA. Has activity towards short and medium chain 2,4-dienoyl-CoAs, but also towards 2,4,7,10,13,16,19-docosaheptaenoyl-CoA, suggesting that it does not constitute a rate limiting step in the peroxisomal degradation of docosahexaenoic acid. In Rattus norvegicus (Rat), this protein is Peroxisomal 2,4-dienoyl-CoA reductase [(3E)-enoyl-CoA-producing] (Decr2).